Here is a 351-residue protein sequence, read N- to C-terminus: MTIAIGQNQERGIFDLIDDWLKKDRFVFVGWSGLLLFPTAYLAVGGWMTGTTFVTSWYTHGLASSYLEGCNFLTAAVSSPANSMGHSLLLLWGPEAQGDFTRWCQIGGLWTFVALHGSFGLIGFCLRQFEIARLVGIRPYNAIAFSGPIAVFVSVFLLYPLGQASWFFAPSFGVAAIFRFLLFLQGFHNWTLNPFHMMGVAGILGGALLCAIHGATVENTLFEDGDAANTFRAFTPTQSEETYSMVTANRFWSQIFGVAFSNKRWLHFFMLFVPVTGLWTSAIGIVGLALNLRAYDFVSQELRAAEDPEFETFYTKNILLNEGIRAWMAAQDQPHENFVFPEEVLPRGNAL.

Residues Thr-39–Thr-59 form a helical membrane-spanning segment. Residue His-116 coordinates chlorophyll a. Residues Gly-123–Pro-139 form a helical membrane-spanning segment. Positions 128 and 141 each coordinate pheophytin a. Residues Val-151 to Ala-164 form a helical membrane-spanning segment. His-196 is a chlorophyll a binding site. A helical membrane pass occupies residues Gly-206–Asp-226. A plastoquinone-binding residues include His-213 and Phe-260. His-213 contacts Fe cation. His-267 contacts Fe cation. The helical transmembrane segment at Gly-277 to Arg-293 threads the bilayer.

Belongs to the reaction center PufL/M/PsbA/D family. In terms of assembly, PSII is composed of 1 copy each of membrane proteins PsbA, PsbB, PsbC, PsbD, PsbE, PsbF, PsbH, PsbI, PsbJ, PsbK, PsbL, PsbM, PsbT, PsbX, PsbY, PsbZ, Psb30/Ycf12, at least 3 peripheral proteins of the oxygen-evolving complex and a large number of cofactors. It forms dimeric complexes. The D1/D2 heterodimer binds P680, chlorophylls that are the primary electron donor of PSII, and subsequent electron acceptors. It shares a non-heme iron and each subunit binds pheophytin, quinone, additional chlorophylls, carotenoids and lipids. There is also a Cl(-1) ion associated with D1 and D2, which is required for oxygen evolution. The PSII complex binds additional chlorophylls, carotenoids and specific lipids. serves as cofactor.

Its subcellular location is the plastid. It localises to the chloroplast thylakoid membrane. It catalyses the reaction 2 a plastoquinone + 4 hnu + 2 H2O = 2 a plastoquinol + O2. Photosystem II (PSII) is a light-driven water:plastoquinone oxidoreductase that uses light energy to abstract electrons from H(2)O, generating O(2) and a proton gradient subsequently used for ATP formation. It consists of a core antenna complex that captures photons, and an electron transfer chain that converts photonic excitation into a charge separation. The D1/D2 (PsbA/PsbD) reaction center heterodimer binds P680, the primary electron donor of PSII as well as several subsequent electron acceptors. D2 is needed for assembly of a stable PSII complex. The chain is Photosystem II D2 protein from Phaeodactylum tricornutum (strain CCAP 1055/1).